We begin with the raw amino-acid sequence, 289 residues long: Testis-expressed protein 26 (289 aa).

The segment at 1–26 is disordered; that stretch reads MEQPGPRAPDPSLCHHNLQPTDDPNW. Mn stretches follow at residues 30-42, 69-83, 144-157, 179-193, and 233-247; these read ATTM…PKTG, QTQY…SHSK, ISLT…RSKA, DTEF…AKIP, and QTTY…YPDF.

This chain is Testis-expressed protein 26 (TEX26), found in Homo sapiens (Human).